Here is a 655-residue protein sequence, read N- to C-terminus: p-hydroxybenzoic acid efflux pump subunit AaeB (655 aa).

Transmembrane regions (helical) follow at residues 13–33, 38–58, 69–89, 93–113, 121–141, 152–172, 370–390, 407–427, 431–451, 455–475, and 482–502; these read FAVKLATAIVLALFVGFHFQL, WAVLTAAIVAAGPAFAAGGEP, LRIIGTFIGCIAGLVIIIAMI, LLMILVCCIWAGFCTWISSLV, WGLAGYTALIIVITIQPEPLL, EIVIGIVCAIIADLLFSPRSI, LFWLWTGWTSGSGAMVMIAVV, FIYGTLAALPLGLLYFLVIIP, QSMLLLCISLAVLGFFLGIEV, LLGSMGALASTINIIVLDNPM, and FLDSALGQIVGCVLAFTVILL.

It belongs to the aromatic acid exporter ArAE (TC 2.A.85) family.

It localises to the cell inner membrane. Forms an efflux pump with AaeA. Could function as a metabolic relief valve, allowing to eliminate certain compounds when they accumulate to high levels in the cell. The polypeptide is p-hydroxybenzoic acid efflux pump subunit AaeB (Shigella boydii serotype 4 (strain Sb227)).